Here is an 882-residue protein sequence, read N- to C-terminus: MPGRARTRARGRARRRESYQQEAPGGPRAPGSATTQEPPQLQSTPRPLQEEVPVVRPLQPRAARGGAGGGAQSQGVKEPGPEAGLHTAPLQERRIGGVFQDLVVNTRQDMKHVKDSKTGSEGTVVQLLANHFRVISRPQWVAYKYNVDYKPDIEDGNLRTILLDQHRRKFGERHIFDGNSLLLSRPLKERRVEWLSTTKDKNIVKITVEFSKELTPTSPDCLRYYNILFRRTFKLLDFEQVGRNYYTKKKAIQLYRHGTSLEIWLGYVTSVLQYENSITLCADVSHKLLRIETAYDFIKRTSAQAQTGNIREEVTNKLIGSIVLTKYNNKTYRVDDIDWKQNPEDTFNKSDGSKITYIDYYRQQHKEIVTVKKQPLLVSQGRWKKGLTGTQREPILLIPQLCHMTGLTDEICKDYSIVKELAKHTRLSPRRRHHTLKEFINTLQDNKKVRELLQLWDLKFDTNFLSVPGRVLKNANIVQGRRMVKANSQGDWSREIRELPLLNAMPLHSWLILYSRSSHREAMSLKGHLQSVTAPMGITMKPAEMIEVDGDANSYIDTLRKYTRPTLQMGMSCLLVFKVICILPNDDKRRYDSIKRYLCTKCPIPSQCVVKKTLEKVQARTIVTKIAQQMNCKMGGALWKVETDVQRTMFVGIDCFHDIVNRQKSIAGFVASTNAELTKWYSQCVIQKTGEELVKELEICLKAALDVWCKNESSMPHSVIVYRDGVGDGQLQALLDHEAKKMSTYLKTISPNNFTLAFIVVKKRINTRFFLKHGSNFQNPPPGTVIDVELTRNEWYDFFIVSQSVQDGTVTPTHYNVIYDTIGLSPDTVQRLTYCLCHMYYNLPGIIRVPAPCHYAHKLAYLVGQSIHQEPNRSLSTRLFYL.

The span at 1-15 (MPGRARTRARGRARR) shows a compositional bias: basic residues. The disordered stretch occupies residues 1–91 (MPGRARTRAR…EAGLHTAPLQ (91 aa)). Over residues 32–46 (SATTQEPPQLQSTPR) the composition is skewed to polar residues. The region spanning 293–406 (TAYDFIKRTS…LIPQLCHMTG (114 aa)) is the PAZ domain. The Piwi domain occupies 578-868 (KVICILPNDD…LAYLVGQSIH (291 aa)).

Belongs to the argonaute family. Piwi subfamily. As to expression, expressed in testis.

The protein resides in the cytoplasm. May play a role during spermatogenesis by repressing transposable elements and preventing their mobilization, which is essential for the germline integrity. Acts via the piRNA metabolic process, which mediates the repression of transposable elements during meiosis by forming complexes composed of piRNAs and Piwi proteins and govern the methylation and subsequent repression of transposons. Directly binds piRNAs, a class of 24 to 30 nucleotide RNAs that are generated by a Dicer-independent mechanism and are primarily derived from transposons and other repeated sequence elements. Besides their function in transposable elements repression, piRNAs are probably involved in other processes during meiosis such as translation regulation. The protein is Piwi-like protein 3 (PIWIL3) of Homo sapiens (Human).